We begin with the raw amino-acid sequence, 229 residues long: Large ribosomal subunit protein uL1 (229 aa).

This sequence belongs to the universal ribosomal protein uL1 family. As to quaternary structure, part of the 50S ribosomal subunit.

Its function is as follows. Binds directly to 23S rRNA. The L1 stalk is quite mobile in the ribosome, and is involved in E site tRNA release. Functionally, protein L1 is also a translational repressor protein, it controls the translation of the L11 operon by binding to its mRNA. The chain is Large ribosomal subunit protein uL1 from Thermus thermophilus (strain ATCC BAA-163 / DSM 7039 / HB27).